Here is a 185-residue protein sequence, read N- to C-terminus: Elongation factor P (185 aa).

Belongs to the elongation factor P family.

The protein resides in the cytoplasm. It functions in the pathway protein biosynthesis; polypeptide chain elongation. Functionally, involved in peptide bond synthesis. Stimulates efficient translation and peptide-bond synthesis on native or reconstituted 70S ribosomes in vitro. Probably functions indirectly by altering the affinity of the ribosome for aminoacyl-tRNA, thus increasing their reactivity as acceptors for peptidyl transferase. The polypeptide is Elongation factor P (Acetivibrio thermocellus (strain ATCC 27405 / DSM 1237 / JCM 9322 / NBRC 103400 / NCIMB 10682 / NRRL B-4536 / VPI 7372) (Clostridium thermocellum)).